A 242-amino-acid chain; its full sequence is Small ribosomal subunit protein uS2 (242 aa).

Belongs to the universal ribosomal protein uS2 family.

This chain is Small ribosomal subunit protein uS2, found in Vibrio parahaemolyticus serotype O3:K6 (strain RIMD 2210633).